Reading from the N-terminus, the 202-residue chain is Hydrogenase expression/formation protein HoxM (202 aa).

3 residues coordinate Ni(2+): Glu-15, Asp-61, and His-92.

Belongs to the peptidase A31 family.

In terms of biological role, absolutely required for hydrogenase activity. Mediates the attachment of hydrogenase to the bacterial membrane; attachment is a requirement for enzymatic activity. The sequence is that of Hydrogenase expression/formation protein HoxM (hoxM) from Cupriavidus necator (strain ATCC 17699 / DSM 428 / KCTC 22496 / NCIMB 10442 / H16 / Stanier 337) (Ralstonia eutropha).